A 329-amino-acid polypeptide reads, in one-letter code: DNA-directed RNA polymerase subunit alpha (329 aa).

Residues 1–235 form an alpha N-terminal domain (alpha-NTD) region; sequence MQGSVTEFLK…EQLEAFVDLR (235 aa). Residues 249–329 are alpha C-terminal domain (alpha-CTD); sequence FDPILLRPVD…NWPPASIADE (81 aa).

It belongs to the RNA polymerase alpha chain family. In terms of assembly, homodimer. The RNAP catalytic core consists of 2 alpha, 1 beta, 1 beta' and 1 omega subunit. When a sigma factor is associated with the core the holoenzyme is formed, which can initiate transcription.

The enzyme catalyses RNA(n) + a ribonucleoside 5'-triphosphate = RNA(n+1) + diphosphate. In terms of biological role, DNA-dependent RNA polymerase catalyzes the transcription of DNA into RNA using the four ribonucleoside triphosphates as substrates. The polypeptide is DNA-directed RNA polymerase subunit alpha (Shigella dysenteriae serotype 1 (strain Sd197)).